Here is a 162-residue protein sequence, read N- to C-terminus: Cyclic pyranopterin monophosphate synthase (162 aa).

Residues 75-77 and 113-114 contribute to the substrate site; these read LCH and ME. Asp-128 is an active-site residue.

The protein belongs to the MoaC family. Homohexamer; trimer of dimers.

It carries out the reaction (8S)-3',8-cyclo-7,8-dihydroguanosine 5'-triphosphate = cyclic pyranopterin phosphate + diphosphate. It participates in cofactor biosynthesis; molybdopterin biosynthesis. In terms of biological role, catalyzes the conversion of (8S)-3',8-cyclo-7,8-dihydroguanosine 5'-triphosphate to cyclic pyranopterin monophosphate (cPMP). In Klebsiella pneumoniae (strain 342), this protein is Cyclic pyranopterin monophosphate synthase.